Consider the following 421-residue polypeptide: 2',3'-cyclic-nucleotide 3'-phosphodiesterase (421 aa).

Phosphoserine is present on residues Ser6 and Ser9. Tyr110 is subject to Phosphotyrosine. Ser170 carries the phosphoserine modification. His251 functions as the Proton acceptor in the catalytic mechanism. Thr253 lines the substrate pocket. Catalysis depends on His330, which acts as the Proton donor. Position 332 (Thr332) interacts with substrate. Ser359 bears the Phosphoserine mark. Cys418 bears the Cysteine methyl ester mark. Cys418 carries S-farnesyl cysteine lipidation. Residues 419–421 (TII) constitute a propeptide, removed in mature form.

The protein belongs to the 2H phosphoesterase superfamily. CNPase family. Exists as monomers and homodimers.

Its subcellular location is the membrane. The protein resides in the melanosome. The catalysed reaction is a nucleoside 2',3'-cyclic phosphate + H2O = a nucleoside 2'-phosphate + H(+). Its function is as follows. Catalyzes the formation of 2'-nucleotide products from 2',3'-cyclic substrates. May participate in RNA metabolism in the myelinating cell, CNP is the third most abundant protein in central nervous system myelin. The chain is 2',3'-cyclic-nucleotide 3'-phosphodiesterase from Homo sapiens (Human).